The chain runs to 120 residues: MLVNRRYTAKGKNLPSSPKKVRPIADNIRGESYIKAIAVLCSMPNKGAKLLEKVVKSAASNAMYHNKNLSEDMIFVKTVMVDDGRRRKKIWPRARGRADRLVNRNCHIFVEVDEKKDIKG.

Residues 1–22 are disordered; sequence MLVNRRYTAKGKNLPSSPKKVR.

It belongs to the universal ribosomal protein uL22 family. In terms of assembly, part of the 50S ribosomal subunit.

In terms of biological role, this protein binds specifically to 23S rRNA; its binding is stimulated by other ribosomal proteins, e.g. L4, L17, and L20. It is important during the early stages of 50S assembly. It makes multiple contacts with different domains of the 23S rRNA in the assembled 50S subunit and ribosome. Functionally, the globular domain of the protein is located near the polypeptide exit tunnel on the outside of the subunit, while an extended beta-hairpin is found that lines the wall of the exit tunnel in the center of the 70S ribosome. In Borreliella burgdorferi (strain ATCC 35210 / DSM 4680 / CIP 102532 / B31) (Borrelia burgdorferi), this protein is Large ribosomal subunit protein uL22.